The following is a 277-amino-acid chain: Cis-2,3-dihydrobiphenyl-2,3-diol dehydrogenase (277 aa).

NAD(+)-binding positions include 9–36 (LITGGASGLGRALVDRFVAEGAKVAVLD) and Asp59. Ser142 contributes to the substrate binding site. The active-site Proton acceptor is the Tyr155. Lys159 lines the NAD(+) pocket.

Belongs to the short-chain dehydrogenases/reductases (SDR) family.

It catalyses the reaction (2R,3S)-3-phenylcyclohexa-3,5-diene-1,2-diol + NAD(+) = biphenyl-2,3-diol + NADH + H(+). It participates in xenobiotic degradation; biphenyl degradation; 2-hydroxy-2,4-pentadienoate and benzoate from biphenyl: step 2/4. The chain is Cis-2,3-dihydrobiphenyl-2,3-diol dehydrogenase (bphB) from Paraburkholderia xenovorans (strain LB400).